The chain runs to 286 residues: Protein GrpE (286 aa).

2 disordered regions span residues Met1–Ala51 and Val260–Thr286. Low complexity-rich tracts occupy residues Gln39–Thr50 and Thr271–Thr286.

It belongs to the GrpE family. In terms of assembly, homodimer.

It localises to the cytoplasm. Participates actively in the response to hyperosmotic and heat shock by preventing the aggregation of stress-denatured proteins, in association with DnaK and GrpE. It is the nucleotide exchange factor for DnaK and may function as a thermosensor. Unfolded proteins bind initially to DnaJ; upon interaction with the DnaJ-bound protein, DnaK hydrolyzes its bound ATP, resulting in the formation of a stable complex. GrpE releases ADP from DnaK; ATP binding to DnaK triggers the release of the substrate protein, thus completing the reaction cycle. Several rounds of ATP-dependent interactions between DnaJ, DnaK and GrpE are required for fully efficient folding. This Gloeothece citriformis (strain PCC 7424) (Cyanothece sp. (strain PCC 7424)) protein is Protein GrpE.